Here is a 1289-residue protein sequence, read N- to C-terminus: uncharacterized protein (1289 aa).

The MHD1 domain occupies 615-733; it reads LDMYDVLKEL…DGMLSYSAQL (119 aa). The tract at residues 745–774 is disordered; the sequence is DEPSYSLESSDTRSSLSLNNANVNHEKSRS. A compositionally biased stretch (low complexity) spans 748–762; that stretch reads SYSLESSDTRSSLSL. The C2 domain occupies 834 to 966; the sequence is AQYHSSHNLE…DDGFPIDFSL (133 aa). Positions 1044-1184 constitute an MHD2 domain; it reads YDAILPLFDY…KSVSELKDEV (141 aa).

It is found in the cytoplasm. This is an uncharacterized protein from Saccharomyces cerevisiae (strain ATCC 204508 / S288c) (Baker's yeast).